We begin with the raw amino-acid sequence, 500 residues long: Probable cytosol aminopeptidase (500 aa).

Residues Lys264 and Asp269 each contribute to the Mn(2+) site. Lys276 is an active-site residue. Mn(2+) contacts are provided by Asp287, Asp346, and Glu348. The active site involves Arg350.

This sequence belongs to the peptidase M17 family. The cofactor is Mn(2+).

Its subcellular location is the cytoplasm. It carries out the reaction Release of an N-terminal amino acid, Xaa-|-Yaa-, in which Xaa is preferably Leu, but may be other amino acids including Pro although not Arg or Lys, and Yaa may be Pro. Amino acid amides and methyl esters are also readily hydrolyzed, but rates on arylamides are exceedingly low.. It catalyses the reaction Release of an N-terminal amino acid, preferentially leucine, but not glutamic or aspartic acids.. In terms of biological role, presumably involved in the processing and regular turnover of intracellular proteins. Catalyzes the removal of unsubstituted N-terminal amino acids from various peptides. The chain is Probable cytosol aminopeptidase from Chlamydia abortus (strain DSM 27085 / S26/3) (Chlamydophila abortus).